The sequence spans 257 residues: Inositol diphosphatase DSP2 (257 aa).

Residues 66–251 (NFSMVDNGIF…VSGLKHTPMS (186 aa)) enclose the Tyrosine-protein phosphatase domain. Ile168 and Lys172 together coordinate 1D-myo-inositol hexakisphosphate. Cys192 functions as the Phosphocysteine intermediate in the catalytic mechanism.

The protein belongs to the protein-tyrosine phosphatase family. Atypical dual-specificity phosphatase Siw14-like subfamily. Expressed in roots, leaves, stems, flowers and siliques.

It catalyses the reaction 5-diphospho-1D-myo-inositol 1,2,3,4,6-pentakisphosphate + H2O = 1D-myo-inositol hexakisphosphate + phosphate + H(+). It carries out the reaction 1,5-bis(diphospho)-1D-myo-inositol 2,3,4,6-tetrakisphosphate + H2O = 1-diphospho-1D-myo-inositol 2,3,4,5,6-pentakisphosphate + phosphate + 2 H(+). The catalysed reaction is 3,5-bis(diphospho)-1D-myo-inositol 1,2,4,6-tetrakisphosphate + H2O = 3-diphospho-1D-myo-inositol 1,2,4,5,6-pentakisphosphate + phosphate + 2 H(+). The enzyme catalyses 6-diphospho-1D-myo-inositol pentakisphosphate + H2O = 1D-myo-inositol hexakisphosphate + phosphate + H(+). Its function is as follows. Cleaves the beta-phosphate at the 5-position of soluble inositol pyrophosphates. Has highest activity on 5-diphosphoinositol 1,2,3,4,6-pentakisphosphate (5-InsP(7)), 1,5-bis-diphosphoinositol 2,3,4,6-tetrakisphosphate (1,5-InsP(8)) and 3,5-InsP(8). Possesses phosphotyrosine phosphatase activity in vitro. Dephosphorylates the phosphoinositides PI(3,5)P2. Hydrolyzes para-nitrophenyl phosphate and O-methylfluorescein phosphate in vitro. This Arabidopsis thaliana (Mouse-ear cress) protein is Inositol diphosphatase DSP2.